The chain runs to 302 residues: Small ribosomal subunit biogenesis GTPase RsgA (302 aa).

The CP-type G domain maps to 75–233 (KNELIRPAVS…IMDTPGFSSM (159 aa)). GTP-binding positions include 124–127 (NKKD) and 175–183 (GPSGVGKSS). Zn(2+) is bound by residues cysteine 257, cysteine 262, histidine 264, and cysteine 270.

Belongs to the TRAFAC class YlqF/YawG GTPase family. RsgA subfamily. Monomer. Associates with 30S ribosomal subunit, binds 16S rRNA. The cofactor is Zn(2+).

The protein localises to the cytoplasm. One of several proteins that assist in the late maturation steps of the functional core of the 30S ribosomal subunit. Helps release RbfA from mature subunits. May play a role in the assembly of ribosomal proteins into the subunit. Circularly permuted GTPase that catalyzes slow GTP hydrolysis, GTPase activity is stimulated by the 30S ribosomal subunit. The polypeptide is Small ribosomal subunit biogenesis GTPase RsgA (Agathobacter rectalis (strain ATCC 33656 / DSM 3377 / JCM 17463 / KCTC 5835 / VPI 0990) (Eubacterium rectale)).